Here is a 333-residue protein sequence, read N- to C-terminus: N-acetyl-gamma-glutamyl-phosphate reductase (333 aa).

Cys145 is an active-site residue.

This sequence belongs to the NAGSA dehydrogenase family. Type 1 subfamily.

It is found in the cytoplasm. The catalysed reaction is N-acetyl-L-glutamate 5-semialdehyde + phosphate + NADP(+) = N-acetyl-L-glutamyl 5-phosphate + NADPH + H(+). Its pathway is amino-acid biosynthesis; L-arginine biosynthesis; N(2)-acetyl-L-ornithine from L-glutamate: step 3/4. Catalyzes the NADPH-dependent reduction of N-acetyl-5-glutamyl phosphate to yield N-acetyl-L-glutamate 5-semialdehyde. The protein is N-acetyl-gamma-glutamyl-phosphate reductase of Salinispora tropica (strain ATCC BAA-916 / DSM 44818 / JCM 13857 / NBRC 105044 / CNB-440).